The chain runs to 527 residues: Inorganic phosphate transporter 1-1 (527 aa).

The Cytoplasmic portion of the chain corresponds to M1–H21. Residues F22 to I42 traverse the membrane as a helical segment. Residues S43 to S70 lie on the Extracellular side of the membrane. A helical membrane pass occupies residues A71 to L91. Over G92–S99 the chain is Cytoplasmic. The chain crosses the membrane as a helical span at residues V100–G120. Topologically, residues S121 to K124 are extracellular. Residues G125–Y145 form a helical membrane-spanning segment. Residues P146–A163 are Cytoplasmic-facing. The chain crosses the membrane as a helical span at residues F164 to L184. Over A185–A211 the chain is Extracellular. Residues D212–W232 traverse the membrane as a helical segment. Residues R233 to R292 are Cytoplasmic-facing. The helical transmembrane segment at H293–S313 threads the bilayer. Residues Q314–A348 lie on the Extracellular side of the membrane. The helical transmembrane segment at L349–M369 threads the bilayer. Topologically, residues G370–R371 are cytoplasmic. Residues F372–P392 form a helical membrane-spanning segment. Topologically, residues Y393–F405 are extracellular. Residues I406 to I426 traverse the membrane as a helical segment. The Cytoplasmic segment spans residues V427–G442. Residues I443–A463 form a helical membrane-spanning segment. Residues Q464–N481 lie on the Extracellular side of the membrane. A helical membrane pass occupies residues A482–E502. Over S503 to K527 the chain is Cytoplasmic.

It belongs to the major facilitator superfamily. Phosphate:H(+) symporter (TC 2.A.1.9) family. In terms of tissue distribution, expressed in roots, stems and leaves.

It localises to the membrane. Functionally, high-affinity transporter for external inorganic phosphate. Required for phosphate acquisition in plant. This is Inorganic phosphate transporter 1-1 (PHT1-1) from Oryza sativa subsp. japonica (Rice).